The primary structure comprises 143 residues: Hemoglobin cathodic subunit alpha (143 aa).

An N-acetylserine modification is found at Ser2. The region spanning 2–143 is the Globin domain; it reads SLTAKDKTLV…VSAALADKYR (142 aa). His59 serves as a coordination point for O2. Residue His89 participates in heme b binding.

Belongs to the globin family. Heterotetramer of two alpha chains and two beta chains. As to expression, red blood cells.

Functionally, involved in oxygen transport from the gills to the various peripheral tissues. In Conger conger (Conger eel), this protein is Hemoglobin cathodic subunit alpha.